The following is a 994-amino-acid chain: ASI1-immunoprecipitated protein 2 (994 aa).

Disordered regions lie at residues 39–182 (AEFS…SGEN) and 187–206 (KADE…NDPE). Over residues 45–54 (KSDESSDENS) the composition is skewed to basic and acidic residues. The segment covering 60 to 102 (SQCSFNGDNLLRSSGVNAPGSSHNTSSEASHLVNSNHDTSSEN) has biased composition (polar residues). Basic and acidic residues-rich tracts occupy residues 119-140 (LLDR…DHQA) and 148-163 (KVKE…EKKN). The PHD-type zinc-finger motif lies at 212-263 (VKVCDTCGDAGREDLLAICSRCSDGAEHTYCMRVMLKKVPKGYWLCEECKFA). The Zn(2+) site is built by Cys-215, Cys-218, Cys-230, Cys-233, His-239, Cys-242, Cys-257, and Cys-260. Disordered stretches follow at residues 342 to 567 (AHYS…NNKG) and 839 to 875 (CSNP…TDRT). Residues 371–384 (SFLKSNSFNSLSSR) are compositionally biased toward low complexity. 2 stretches are compositionally biased toward polar residues: residues 417-435 (VGKS…NCND) and 449-464 (TEAN…NSSI). Composition is skewed to basic and acidic residues over residues 469–478 (SPRDLKDLQS), 536–552 (PRSR…KDAV), and 858–875 (DTFR…TDRT).

In terms of assembly, component of the ASI1-AIPP1-EDM2 (AAE) RNA regulatory complex composed of at least AIPP1/EDM3, ASI1 and EDM2 and may contain CPL2, AIPP2 and AIPP3/BDT1. Part of the BAH-PHD bivalent histone reader complex that contains AIPP2, PAIPP2 and AIPP3/BDT1; the BAH-PHD module associates with CPL2 to form the BAH-PHD-CPL2 complex (BPC) for transcriptional repression. Binds directly to ASI1, AIPP3/BDT1 and CPL2 but not to PAIPP2. In terms of tissue distribution, expressed ubiquitously.

Functionally, together with AIPP3/BDT1 and PAIPP2, cooperates to form a BAH-PHD bivalent histone reader complex able to read histone H3 lysine 27 trimethylation (H3K27me3) and low-methylated H3K4 histone marks in order to regulate transcription, especially to prevent early flowering; promotes AIPP3/BDT1 binding to H3K27me3. CPL2 is subsequently recruited to form a BAH-PHD-CPL2 complex (BPC) in order to silence several H3K27me3 and low-methylated H3K4 enriched loci, including AGO5, via the phosphorylation state-dependent inhibition of Pol II release from the transcriptional start site (e.g. Ser5P-Pol II dephosphorylation). The BPC complex represses flowering by inhibiting the expression of several genes, including AGL6, FT, FUL and SOC1. Prevents the accumulation of intronic heterochromatin-containing genes (e.g. IBM1, At3g05410 and RPP7). In Arabidopsis thaliana (Mouse-ear cress), this protein is ASI1-immunoprecipitated protein 2.